The following is an 89-amino-acid chain: Small ribosomal subunit protein uS15 (89 aa).

This sequence belongs to the universal ribosomal protein uS15 family. In terms of assembly, part of the 30S ribosomal subunit. Forms a bridge to the 50S subunit in the 70S ribosome, contacting the 23S rRNA.

In terms of biological role, one of the primary rRNA binding proteins, it binds directly to 16S rRNA where it helps nucleate assembly of the platform of the 30S subunit by binding and bridging several RNA helices of the 16S rRNA. Forms an intersubunit bridge (bridge B4) with the 23S rRNA of the 50S subunit in the ribosome. In Shewanella baltica (strain OS185), this protein is Small ribosomal subunit protein uS15.